Here is a 237-residue protein sequence, read N- to C-terminus: Phosphoribosylaminoimidazole-succinocarboxamide synthase (237 aa).

It belongs to the SAICAR synthetase family.

The enzyme catalyses 5-amino-1-(5-phospho-D-ribosyl)imidazole-4-carboxylate + L-aspartate + ATP = (2S)-2-[5-amino-1-(5-phospho-beta-D-ribosyl)imidazole-4-carboxamido]succinate + ADP + phosphate + 2 H(+). It functions in the pathway purine metabolism; IMP biosynthesis via de novo pathway; 5-amino-1-(5-phospho-D-ribosyl)imidazole-4-carboxamide from 5-amino-1-(5-phospho-D-ribosyl)imidazole-4-carboxylate: step 1/2. In Deinococcus deserti (strain DSM 17065 / CIP 109153 / LMG 22923 / VCD115), this protein is Phosphoribosylaminoimidazole-succinocarboxamide synthase.